The primary structure comprises 65 residues: Photosystem II reaction center protein Z (65 aa).

Helical transmembrane passes span 11–31 (LVLA…VIFA) and 44–64 (WLAC…DGIF).

The protein belongs to the PsbZ family. In terms of assembly, PSII is composed of 1 copy each of membrane proteins PsbA, PsbB, PsbC, PsbD, PsbE, PsbF, PsbH, PsbI, PsbJ, PsbK, PsbL, PsbM, PsbT, PsbY, PsbZ, Psb30/Ycf12, at least 3 peripheral proteins of the oxygen-evolving complex and a large number of cofactors. It forms dimeric complexes.

The protein localises to the plastid. The protein resides in the chloroplast thylakoid membrane. Its function is as follows. May control the interaction of photosystem II (PSII) cores with the light-harvesting antenna, regulates electron flow through the 2 photosystem reaction centers. PSII is a light-driven water plastoquinone oxidoreductase, using light energy to abstract electrons from H(2)O, generating a proton gradient subsequently used for ATP formation. The chain is Photosystem II reaction center protein Z from Euglena gracilis.